The chain runs to 229 residues: Cytidylate kinase (229 aa).

12 to 20 (GPSGTGKSS) is an ATP binding site.

Belongs to the cytidylate kinase family. Type 1 subfamily.

It is found in the cytoplasm. The catalysed reaction is CMP + ATP = CDP + ADP. It carries out the reaction dCMP + ATP = dCDP + ADP. This is Cytidylate kinase from Rhodococcus opacus (strain B4).